Reading from the N-terminus, the 175-residue chain is Probable coatomer subunit zeta-A (175 aa).

It belongs to the adaptor complexes small subunit family. As to quaternary structure, oligomeric complex that consists of at least the alpha, beta, beta', gamma, delta, epsilon and zeta subunits.

It localises to the cytoplasm. The protein localises to the golgi apparatus membrane. The protein resides in the cytoplasmic vesicle. Its subcellular location is the COPI-coated vesicle membrane. In terms of biological role, the coatomer is a cytosolic protein complex that binds to dilysine motifs and reversibly associates with Golgi non-clathrin-coated vesicles, which further mediate biosynthetic protein transport from the ER, via the Golgi up to the trans Golgi network. Coatomer complex is required for budding from Golgi membranes, and is essential for the retrograde Golgi-to-ER transport of dilysine-tagged proteins. The zeta subunit may be involved in regulating the coat assembly and, hence, the rate of biosynthetic protein transport due to its association-dissociation properties with the coatomer complex. This is Probable coatomer subunit zeta-A (copZa) from Dictyostelium discoideum (Social amoeba).